A 217-amino-acid chain; its full sequence is 3,4-dihydroxy-2-butanone 4-phosphate synthase (217 aa).

Residues 37 to 38, aspartate 42, 150 to 154, and glutamate 174 each bind D-ribulose 5-phosphate; these read RE and RGGHT. Glutamate 38 is a binding site for Mg(2+). Residue histidine 153 coordinates Mg(2+).

Belongs to the DHBP synthase family. In terms of assembly, homodimer. Mg(2+) serves as cofactor. Requires Mn(2+) as cofactor.

It carries out the reaction D-ribulose 5-phosphate = (2S)-2-hydroxy-3-oxobutyl phosphate + formate + H(+). The protein operates within cofactor biosynthesis; riboflavin biosynthesis; 2-hydroxy-3-oxobutyl phosphate from D-ribulose 5-phosphate: step 1/1. Functionally, catalyzes the conversion of D-ribulose 5-phosphate to formate and 3,4-dihydroxy-2-butanone 4-phosphate. The protein is 3,4-dihydroxy-2-butanone 4-phosphate synthase of Escherichia coli O17:K52:H18 (strain UMN026 / ExPEC).